Consider the following 311-residue polypeptide: Probable cell division protein WhiA (311 aa).

A DNA-binding region (H-T-H motif) is located at residues 274–307 (SLKELGSLLTPPLTKSGVNHRFRKLELIAEKIRN).

Belongs to the WhiA family.

Involved in cell division and chromosome segregation. This chain is Probable cell division protein WhiA, found in Carboxydothermus hydrogenoformans (strain ATCC BAA-161 / DSM 6008 / Z-2901).